The following is an 87-amino-acid chain: Large ribosomal subunit protein bL27 (87 aa).

A disordered region spans residues 1 to 26; that stretch reads MAHKKGTGSTRNGRDSNSKRLGVKAY.

It belongs to the bacterial ribosomal protein bL27 family.

This Prochlorococcus marinus (strain SARG / CCMP1375 / SS120) protein is Large ribosomal subunit protein bL27.